Reading from the N-terminus, the 966-residue chain is Regulator of G-protein signaling 3 (966 aa).

A PDZ domain is found at 18 to 95 (QITIRRGKDG…EIILLVWRVV (78 aa)). Positions 115-135 (THDLLSPPNKREKNCTHGAPV) are disordered. Arg167 bears the Omega-N-methylarginine mark. Disordered regions lie at residues 403–618 (EADE…TGAV) and 637–704 (YSQL…RVQN). Polar residues-rich tracts occupy residues 527-548 (PETS…TELP) and 576-594 (SSAS…SSLG). Acidic residues predominate over residues 649–675 (GEDEDAEEGEEGGEGEEDEEDDTSDDN). The span at 676–686 (YGDRSEAKRSS) shows a compositional bias: basic and acidic residues. Phosphoserine is present on residues Ser712, Ser715, Ser747, and Ser776. Positions 806-830 (FRRRNESPGAQPASKTDKTTKSFKP) are disordered. Over residues 820 to 830 (KTDKTTKSFKP) the composition is skewed to basic and acidic residues. Positions 841–966 (SLEKLLLHKY…INQKKMSPPL (126 aa)) constitute an RGS domain.

As to quaternary structure, binds the GNB1-GNG2 heterodimer. Binds EFNB1 and EFNB2. In terms of processing, phosphorylated by cyclic GMP-dependent protein kinase. ISGylated. As to expression, detected in embryos from E8.5-16.5 in cortical ventricular zone, dorsal root ganglia and cerebellar primordia. Isoform 3 is detected in testis and in spermatocytes from newborn mice. Levels increase and reach a maximum after 21 days; after this they decrease again. Long isoforms are widely expressed.

Its subcellular location is the cytoplasm. It is found in the cell membrane. It localises to the nucleus. Functionally, down-regulates signaling from heterotrimeric G-proteins by increasing the GTPase activity of the alpha subunits, thereby driving them into their inactive GDP-bound form. Down-regulates G-protein-mediated release of inositol phosphates and activation of MAP kinases. This Mus musculus (Mouse) protein is Regulator of G-protein signaling 3 (Rgs3).